The primary structure comprises 129 residues: Large ribosomal subunit protein bL12c (129 aa).

The protein belongs to the bacterial ribosomal protein bL12 family. In terms of assembly, homodimer. Part of the ribosomal stalk of the 50S ribosomal subunit. Forms a multimeric L10(L12)X complex, where L10 forms an elongated spine to which 2 to 4 L12 dimers bind in a sequential fashion. Binds GTP-bound translation factors.

It is found in the plastid. The protein resides in the chloroplast. In terms of biological role, forms part of the ribosomal stalk which helps the ribosome interact with GTP-bound translation factors. Is thus essential for accurate translation. This is Large ribosomal subunit protein bL12c from Oltmannsiellopsis viridis (Marine flagellate).